Consider the following 406-residue polypeptide: Multifunctional CCA protein (406 aa).

2 residues coordinate ATP: Gly-8 and Arg-11. The CTP site is built by Gly-8 and Arg-11. Positions 21 and 23 each coordinate Mg(2+). Arg-91, Arg-137, and Arg-140 together coordinate ATP. The CTP site is built by Arg-91, Arg-137, and Arg-140. The HD domain occupies 225–326 (TGIHTLKVLE…LKLLNRVDAF (102 aa)).

The protein belongs to the tRNA nucleotidyltransferase/poly(A) polymerase family. Bacterial CCA-adding enzyme type 1 subfamily. As to quaternary structure, monomer. Can also form homodimers and oligomers. Mg(2+) is required as a cofactor. The cofactor is Ni(2+).

The enzyme catalyses a tRNA precursor + 2 CTP + ATP = a tRNA with a 3' CCA end + 3 diphosphate. The catalysed reaction is a tRNA with a 3' CCA end + 2 CTP + ATP = a tRNA with a 3' CCACCA end + 3 diphosphate. In terms of biological role, catalyzes the addition and repair of the essential 3'-terminal CCA sequence in tRNAs without using a nucleic acid template. Adds these three nucleotides in the order of C, C, and A to the tRNA nucleotide-73, using CTP and ATP as substrates and producing inorganic pyrophosphate. tRNA 3'-terminal CCA addition is required both for tRNA processing and repair. Also involved in tRNA surveillance by mediating tandem CCA addition to generate a CCACCA at the 3' terminus of unstable tRNAs. While stable tRNAs receive only 3'-terminal CCA, unstable tRNAs are marked with CCACCA and rapidly degraded. This chain is Multifunctional CCA protein, found in Nitrosococcus oceani (strain ATCC 19707 / BCRC 17464 / JCM 30415 / NCIMB 11848 / C-107).